The chain runs to 198 residues: Nucleoid occlusion factor SlmA (198 aa).

The 61-residue stretch at 10 to 70 folds into the HTH tetR-type domain; the sequence is NRREEILQSL…SLIEFIEDSL (61 aa). A DNA-binding region (H-T-H motif) is located at residues 33-52; that stretch reads TTAKLAASVGVSEAALYRHF. The stretch at 117 to 144 forms a coiled coil; the sequence is EQDRLQGRINQLFERIEAQLRQVLREKR.

It belongs to the nucleoid occlusion factor SlmA family. Homodimer. Interacts with FtsZ.

The protein localises to the cytoplasm. It localises to the nucleoid. Required for nucleoid occlusion (NO) phenomenon, which prevents Z-ring formation and cell division over the nucleoid. Acts as a DNA-associated cell division inhibitor that binds simultaneously chromosomal DNA and FtsZ, and disrupts the assembly of FtsZ polymers. SlmA-DNA-binding sequences (SBS) are dispersed on non-Ter regions of the chromosome, preventing FtsZ polymerization at these regions. This Salmonella paratyphi A (strain ATCC 9150 / SARB42) protein is Nucleoid occlusion factor SlmA.